The following is a 396-amino-acid chain: MSEYSLFTSESVSEGHPDKIADQISDAVLDAIIAEDKHARVACETLVKTGVAIVAGEITTSAWIDLEELVRKVIVDIGYDSSDVGYDGHTCGIINIIGKQSVDINQGVDRAKPEDQGAGDQGLMFGYASDETEVLMPAPICFSHRLVERQTEARKSGLLPWLRPDAKSQVTCRYENGKVVGIDAVVLSTQHNPEITQADLHEAVMELIIKHTLPAELLHKDTQFHINPTGKFVIGGPVGDCGLTGRKIIVDSYGGMARHGGGAFSGKDPSKVDRSAAYAGRYVAKNIVAAGLAERCEIQVSYAIGVAQPTSISINTFGTGKIGDDRIVQLVREHFDLRPYAITHMLDLLHPMYRPTAAYGHFGRTPVEMTVGNDSFTAFTWERTDKAEALRSDAGL.

His16 serves as a coordination point for ATP. Position 18 (Asp18) interacts with Mg(2+). Residue Glu44 coordinates K(+). Residues Glu57 and Gln100 each contribute to the L-methionine site. Positions 100–110 (QSVDINQGVDR) are flexible loop. ATP-binding positions include 165-167 (DAK), 231-232 (KF), Asp240, 246-247 (RK), Ala263, and Lys267. Asp240 provides a ligand contact to L-methionine. Lys271 contacts L-methionine.

It belongs to the AdoMet synthase family. As to quaternary structure, homotetramer; dimer of dimers. Mg(2+) is required as a cofactor. The cofactor is K(+).

It is found in the cytoplasm. The enzyme catalyses L-methionine + ATP + H2O = S-adenosyl-L-methionine + phosphate + diphosphate. It participates in amino-acid biosynthesis; S-adenosyl-L-methionine biosynthesis; S-adenosyl-L-methionine from L-methionine: step 1/1. Its function is as follows. Catalyzes the formation of S-adenosylmethionine (AdoMet) from methionine and ATP. The overall synthetic reaction is composed of two sequential steps, AdoMet formation and the subsequent tripolyphosphate hydrolysis which occurs prior to release of AdoMet from the enzyme. The sequence is that of S-adenosylmethionine synthase from Azotobacter vinelandii (strain DJ / ATCC BAA-1303).